The primary structure comprises 378 residues: Beta sliding clamp (378 aa).

The protein belongs to the beta sliding clamp family. In terms of assembly, forms a ring-shaped head-to-tail homodimer around DNA which binds and tethers DNA polymerases and other proteins to the DNA. The DNA replisome complex has a single clamp-loading complex (3 tau and 1 each of delta, delta', psi and chi subunits) which binds 3 Pol III cores (1 core on the leading strand and 2 on the lagging strand) each with a beta sliding clamp dimer. Additional proteins in the replisome are other copies of gamma, psi and chi, Ssb, DNA helicase and RNA primase.

Its subcellular location is the cytoplasm. Confers DNA tethering and processivity to DNA polymerases and other proteins. Acts as a clamp, forming a ring around DNA (a reaction catalyzed by the clamp-loading complex) which diffuses in an ATP-independent manner freely and bidirectionally along dsDNA. Initially characterized for its ability to contact the catalytic subunit of DNA polymerase III (Pol III), a complex, multichain enzyme responsible for most of the replicative synthesis in bacteria; Pol III exhibits 3'-5' exonuclease proofreading activity. The beta chain is required for initiation of replication as well as for processivity of DNA replication. In Streptococcus pneumoniae serotype 4 (strain ATCC BAA-334 / TIGR4), this protein is Beta sliding clamp (dnaN).